The chain runs to 440 residues: NADH-quinone oxidoreductase subunit D (440 aa).

The protein belongs to the complex I 49 kDa subunit family. NDH-1 is composed of 14 different subunits. Subunits NuoB, C, D, E, F, and G constitute the peripheral sector of the complex.

It is found in the cell membrane. The catalysed reaction is a quinone + NADH + 5 H(+)(in) = a quinol + NAD(+) + 4 H(+)(out). NDH-1 shuttles electrons from NADH, via FMN and iron-sulfur (Fe-S) centers, to quinones in the respiratory chain. The immediate electron acceptor for the enzyme in this species is believed to be a menaquinone. Couples the redox reaction to proton translocation (for every two electrons transferred, four hydrogen ions are translocated across the cytoplasmic membrane), and thus conserves the redox energy in a proton gradient. The sequence is that of NADH-quinone oxidoreductase subunit D from Mycobacterium bovis (strain ATCC BAA-935 / AF2122/97).